The sequence spans 701 residues: Polyribonucleotide nucleotidyltransferase (701 aa).

Residues D487 and D493 each coordinate Mg(2+). Residues 553–612 enclose the KH domain; sequence PRLYTLRINPDKIRDVIGKGGSVIRALTEETGTSIDIAEDGLITIASVSAEGAEEAKRRI. The 71-residue stretch at 622–692 folds into the S1 motif domain; sequence GKIYEGTVVK…ERGRIRLSIK (71 aa).

The protein belongs to the polyribonucleotide nucleotidyltransferase family. It depends on Mg(2+) as a cofactor.

Its subcellular location is the cytoplasm. It catalyses the reaction RNA(n+1) + phosphate = RNA(n) + a ribonucleoside 5'-diphosphate. Functionally, involved in mRNA degradation. Catalyzes the phosphorolysis of single-stranded polyribonucleotides processively in the 3'- to 5'-direction. The sequence is that of Polyribonucleotide nucleotidyltransferase from Laribacter hongkongensis (strain HLHK9).